The primary structure comprises 146 residues: uncharacterized protein (146 aa).

This is an uncharacterized protein from Saccharomyces cerevisiae (strain ATCC 204508 / S288c) (Baker's yeast).